The sequence spans 425 residues: High-affinity branched-chain amino acid transport system permease protein LivM (425 aa).

11 helical membrane-spanning segments follow: residues isoleucine 6–valine 26, tryptophan 45–phenylalanine 65, phenylalanine 92–valine 112, isoleucine 120–leucine 140, phenylalanine 145–tryptophan 165, cysteine 167–leucine 187, glycine 191–asparagine 211, arginine 260–asparagine 280, isoleucine 311–alanine 331, isoleucine 353–valine 373, and methionine 387–proline 407.

This sequence belongs to the binding-protein-dependent transport system permease family. LivHM subfamily.

The protein localises to the cell inner membrane. Its function is as follows. Part of the binding-protein-dependent transport system for branched-chain amino acids. Probably responsible for the translocation of the substrates across the membrane. The protein is High-affinity branched-chain amino acid transport system permease protein LivM (livM) of Escherichia coli (strain K12).